A 209-amino-acid chain; its full sequence is Kynurenine formamidase (209 aa).

Phe-19 provides a ligand contact to substrate. Residues His-49, His-53, and Asp-55 each coordinate Zn(2+). His-59 functions as the Proton donor/acceptor in the catalytic mechanism. His-160 and Glu-172 together coordinate Zn(2+).

Belongs to the Cyclase 1 superfamily. KynB family. In terms of assembly, homodimer. Requires Zn(2+) as cofactor.

It carries out the reaction N-formyl-L-kynurenine + H2O = L-kynurenine + formate + H(+). It participates in amino-acid degradation; L-tryptophan degradation via kynurenine pathway; L-kynurenine from L-tryptophan: step 2/2. In terms of biological role, catalyzes the hydrolysis of N-formyl-L-kynurenine to L-kynurenine, the second step in the kynurenine pathway of tryptophan degradation. This Delftia acidovorans (strain DSM 14801 / SPH-1) protein is Kynurenine formamidase.